Consider the following 412-residue polypeptide: Protein ALF (412 aa).

Disordered stretches follow at residues 1–47 (MDPE…PLPP) and 154–234 (GLSE…GISE). Residues 31 to 47 (PPQPPPPPLPPPQPLPP) are compositionally biased toward pro residues. The segment covering 187–196 (MRQRRRKKVV) has biased composition (basic residues). The span at 206–221 (MEEDEDTEEGQEDNED) shows a compositional bias: acidic residues. DNA-binding regions lie at residues 237-241 (REHPF), 306-313 (NKPKMRHY), and 377-380 (YVPT).

Belongs to the FLO/LFY family. In terms of tissue distribution, expressed in the floral meristem and also in the vegetative meristem.

The protein resides in the nucleus. Its function is as follows. Probable transcription factor required for the specification of floral meristem identity. This is Protein ALF (ALF) from Petunia hybrida (Petunia).